Consider the following 242-residue polypeptide: MAAAAAAAGSSDSRKPAAHPPPRDFLVHVEAYLSRRDGVDKLLKISRYAARLALAAGPLPPAASARLKSFESSVGLSRKAFRLGKFVQNVNALRAHPHPPPAVALLAYGGEGVYYFLEQFVWLAKAGLLPAHLLPRLQRLSAWAELLGYVGSITIKLEEIGKLESSVKMRLKEGCREESDVVRTLRVKLLLKRMSVVQDVADAVMALGDVTDGKGLLGSSTLMASAGLLSALISAHKNWNSC.

Residues 1-22 are disordered; it reads MAAAAAAAGSSDSRKPAAHPPP. Residues 1–102 lie on the Cytoplasmic side of the membrane; sequence MAAAAAAAGS…LRAHPHPPPA (102 aa). A helical membrane pass occupies residues 103-123; it reads VALLAYGGEGVYYFLEQFVWL. At 124–214 the chain is on the lumenal side; that stretch reads AKAGLLPAHL…MALGDVTDGK (91 aa). A helical transmembrane segment spans residues 215–235; it reads GLLGSSTLMASAGLLSALISA. Over 236 to 242 the chain is Cytoplasmic; it reads HKNWNSC.

It belongs to the peroxin-11 family. In terms of tissue distribution, expressed in seedlings, roots, leaf sheaths, spikelets and endosperm.

It localises to the peroxisome membrane. In terms of biological role, involved in peroxisomal proliferation. This Oryza sativa subsp. japonica (Rice) protein is Peroxisomal membrane protein 11-3 (PEX11-3).